The primary structure comprises 186 residues: Ribosome-recycling factor (186 aa).

The disordered stretch occupies residues 144–163 (EKDGVIGQDESRAQSERVQK).

This sequence belongs to the RRF family.

The protein resides in the cytoplasm. Responsible for the release of ribosomes from messenger RNA at the termination of protein biosynthesis. May increase the efficiency of translation by recycling ribosomes from one round of translation to another. The sequence is that of Ribosome-recycling factor from Rhizobium etli (strain CIAT 652).